A 393-amino-acid polypeptide reads, in one-letter code: MSASPKGFRFATVSAGFRKEARPDLALIVSDTPATAAGVFTTNRFQAAPVVVARENLSARPVARAVVINSGQANACTGDEGMTNCRTTLDLVGKACGIPAAEVLPASTGVIGAQLHMDKWREAAPRLAAALGQNTHHDFARAIMTTDAFPKVAERELAIAGTTVRLVGMAKGAGMICPNMATMLSVVLCDAAVTPEAWQRLFLDAVDRTFNRVTVDGDTSTNDTVFGLANGASGVTVEGEDLAKLGEALTDVLARLAYMLVQDGEGATKVMRVKVSGAVDDAEAEAVARTVGHSQLVKTAMYGRDANWGRIVAAVGRSGASFKAEDVVVTLCGVELFRNGQPTDLDFDTLLREPLKGRDVTVDIELGAGTGHYELLASDLTHDYVNCNADYRS.

Substrate is bound by residues Thr-145, Lys-171, Thr-182, Glu-265, Asn-388, and Ser-393. The Nucleophile role is filled by Thr-182.

It belongs to the ArgJ family. As to quaternary structure, heterotetramer of two alpha and two beta chains.

The protein localises to the cytoplasm. The enzyme catalyses N(2)-acetyl-L-ornithine + L-glutamate = N-acetyl-L-glutamate + L-ornithine. The catalysed reaction is L-glutamate + acetyl-CoA = N-acetyl-L-glutamate + CoA + H(+). It participates in amino-acid biosynthesis; L-arginine biosynthesis; L-ornithine and N-acetyl-L-glutamate from L-glutamate and N(2)-acetyl-L-ornithine (cyclic): step 1/1. It functions in the pathway amino-acid biosynthesis; L-arginine biosynthesis; N(2)-acetyl-L-ornithine from L-glutamate: step 1/4. Its function is as follows. Catalyzes two activities which are involved in the cyclic version of arginine biosynthesis: the synthesis of N-acetylglutamate from glutamate and acetyl-CoA as the acetyl donor, and of ornithine by transacetylation between N(2)-acetylornithine and glutamate. The chain is Arginine biosynthesis bifunctional protein ArgJ from Nitratidesulfovibrio vulgaris (strain ATCC 29579 / DSM 644 / CCUG 34227 / NCIMB 8303 / VKM B-1760 / Hildenborough) (Desulfovibrio vulgaris).